Consider the following 154-residue polypeptide: MFFVLESNSNNVLFRIQRIYIKDISFEAPNTPGVFQINWNPKIKVDLNSDAKNIHIDMYEVVLCVTVTAKIEDDTAFLCQVKQAGIFNVSGLNKTQMIRCLKVHCPTILFPYASECVSNQVSRGTFPQLNLDPINFDILFIQSLQKKYNDTLKI.

This sequence belongs to the SecB family. Homotetramer, a dimer of dimers. One homotetramer interacts with 1 SecA dimer.

The protein localises to the cytoplasm. Functionally, one of the proteins required for the normal export of preproteins out of the cell cytoplasm. It is a molecular chaperone that binds to a subset of precursor proteins, maintaining them in a translocation-competent state. It also specifically binds to its receptor SecA. The sequence is that of Protein-export protein SecB from Blochmanniella pennsylvanica (strain BPEN).